A 409-amino-acid polypeptide reads, in one-letter code: Translation initiation factor 2 subunit gamma (409 aa).

The region spanning 6–203 is the tr-type G domain; that stretch reads QPEVNIGLVG…AVQSEIPTPE (198 aa). Residues 15–22 form a G1 region; the sequence is GHVDHGKT. Asp-18, Thr-22, Gly-43, and Ser-45 together coordinate Mg(2+). Residue 18–23 participates in GTP binding; that stretch reads DHGKTT. Positions 43 to 47 are G2; that stretch reads GISIR. Residues 90–93 form a G3 region; the sequence is DAPG. Residues 146 to 149 and 181 to 183 each bind GTP; these read NKVD and SAG. A G4 region spans residues 146–149; it reads NKVD. Residues 181–183 are G5; it reads SAG.

The protein belongs to the TRAFAC class translation factor GTPase superfamily. Classic translation factor GTPase family. EIF2G subfamily. As to quaternary structure, heterotrimer composed of an alpha, a beta and a gamma chain. The cofactor is Mg(2+).

The enzyme catalyses GTP + H2O = GDP + phosphate + H(+). Its function is as follows. eIF-2 functions in the early steps of protein synthesis by forming a ternary complex with GTP and initiator tRNA. The protein is Translation initiation factor 2 subunit gamma of Haloarcula marismortui (strain ATCC 43049 / DSM 3752 / JCM 8966 / VKM B-1809) (Halobacterium marismortui).